We begin with the raw amino-acid sequence, 298 residues long: 1,2-dihydroxynaphthalene dioxygenase (298 aa).

VOC domains follow at residues 6–121 (ELGY…IFYG) and 146–267 (GIGH…FGWG). Residue H149 coordinates Fe cation. Residues H149, 196 to 197 (QH), H212, and Y253 each bind substrate. H212 contacts Fe cation. Residue E263 coordinates Fe cation.

Belongs to the extradiol ring-cleavage dioxygenase family. Homooctamer. The cofactor is Fe(2+).

It catalyses the reaction naphthalene-1,2-diol + O2 = 2-hydroxychromene-2-carboxylate + H(+). The protein operates within aromatic compound metabolism; naphthalene degradation. In terms of biological role, involved in the naphthalene and naphthalenesulfonate catabolic pathway. Catalyzes the meta-cleavage of 1,2-dihydroxynaphthalene (1,2-DHN) to yield 2-hydroxychromene-2-carboxylic acid. Can also cleave 1,2,5-trihydroxynaphthalene (1,2,5-THN), 1,2,6-trihydroxynaphthalene (1,2,6-THN), 1,2,7-trihydroxynaphthalene (1,2,7-THN), 2,3-dihydroxybiphenyl, 3,4-dihydroxybiphenyl, catechol, 3-methylcatechol and 4-methylcatechol. This chain is 1,2-dihydroxynaphthalene dioxygenase (nsaC), found in Sphingobium xenophagum.